Consider the following 255-residue polypeptide: Tritrans,polycis-undecaprenyl-diphosphate synthase (geranylgeranyl-diphosphate specific) (255 aa).

Asp34 is an active-site residue. Asp34 contributes to the Mg(2+) binding site. Substrate contacts are provided by residues Gly35–Arg38, His51, and Ser79–Glu81. The Proton acceptor role is filled by Asn82. Residues Phe83, Arg85, Arg204, and Arg210–Ser212 each bind substrate. Residue Glu223 coordinates Mg(2+).

The protein belongs to the UPP synthase family. Homodimer. Requires Mg(2+) as cofactor.

It catalyses the reaction geranylgeranyl diphosphate + 7 isopentenyl diphosphate = tri-trans,hepta-cis-undecaprenyl diphosphate + 7 diphosphate. Catalyzes the sequential condensation of isopentenyl diphosphate (IPP) with geranylgeranyl diphosphate (GGPP) to yield (2Z,6Z,10Z,14Z,18Z,22Z,26Z,30E,34E,38E)-undecaprenyl diphosphate (tritrans,heptacis-UPP). It is probably the precursor of glycosyl carrier lipids. This Picrophilus torridus (strain ATCC 700027 / DSM 9790 / JCM 10055 / NBRC 100828 / KAW 2/3) protein is Tritrans,polycis-undecaprenyl-diphosphate synthase (geranylgeranyl-diphosphate specific).